We begin with the raw amino-acid sequence, 669 residues long: UvrABC system protein B (669 aa).

The Helicase ATP-binding domain maps to 26–414; that stretch reads EGLEDGLAHQ…SGDVVEQVVR (389 aa). Residue 39 to 46 participates in ATP binding; the sequence is GVTGSGKT. Positions 92 to 115 match the Beta-hairpin motif; it reads YYDYYQPEAYVPSSDTFIEKDASV. The Helicase C-terminal domain maps to 431-597; that stretch reads QVDDLLSEIR…GLNKKINDIL (167 aa). The region spanning 629–664 is the UVR domain; that stretch reads ESKIRELEAKMYQHAQDLEFEQAASVRDQVQALREQ.

It belongs to the UvrB family. Forms a heterotetramer with UvrA during the search for lesions. Interacts with UvrC in an incision complex.

The protein localises to the cytoplasm. Functionally, the UvrABC repair system catalyzes the recognition and processing of DNA lesions. A damage recognition complex composed of 2 UvrA and 2 UvrB subunits scans DNA for abnormalities. Upon binding of the UvrA(2)B(2) complex to a putative damaged site, the DNA wraps around one UvrB monomer. DNA wrap is dependent on ATP binding by UvrB and probably causes local melting of the DNA helix, facilitating insertion of UvrB beta-hairpin between the DNA strands. Then UvrB probes one DNA strand for the presence of a lesion. If a lesion is found the UvrA subunits dissociate and the UvrB-DNA preincision complex is formed. This complex is subsequently bound by UvrC and the second UvrB is released. If no lesion is found, the DNA wraps around the other UvrB subunit that will check the other stand for damage. This chain is UvrABC system protein B, found in Photorhabdus laumondii subsp. laumondii (strain DSM 15139 / CIP 105565 / TT01) (Photorhabdus luminescens subsp. laumondii).